The primary structure comprises 161 residues: Type II secretion system protein M (161 aa).

The Cytoplasmic portion of the chain corresponds to 1-16 (MHNLLALWQQRTRRER). Residues 17-36 (CLLLGMAVVLLIGLVYYTLW) form a helical membrane-spanning segment. Over 37–161 (QPWQNREAQW…TLVLERSDEK (125 aa)) the chain is Periplasmic.

Belongs to the GSP M family. In terms of assembly, type II secretion system is composed of four main components: the outer membrane complex, the inner membrane complex, the cytoplasmic secretion ATPase and the periplasm-spanning pseudopilus. Forms homodimers. Interacts with PulL/GspL. Interacts with PulE/GspE and PulF/GspF.

It is found in the cell inner membrane. Inner membrane component of the type II secretion system required for the energy-dependent secretion of extracellular factors such as proteases and toxins from the periplasm. Plays a role in the complex assembly and recruits PulL resulting in a stable complex in the inner membrane. Provides thus a link between the energy-providing PulE protein in the cytoplasm and the rest of the T2SS machinery. In Klebsiella pneumoniae, this protein is Type II secretion system protein M (pulM).